The primary structure comprises 370 residues: 3-dehydroquinate synthase (370 aa).

Residues 112-116 (GVIGD), 136-137 (TT), Lys-149, Lys-158, and 176-179 (TLKT) each bind NAD(+). Residues Glu-191, His-256, and His-273 each contribute to the Zn(2+) site.

Belongs to the sugar phosphate cyclases superfamily. Dehydroquinate synthase family. Co(2+) is required as a cofactor. Zn(2+) serves as cofactor. The cofactor is NAD(+).

The protein resides in the cytoplasm. The catalysed reaction is 7-phospho-2-dehydro-3-deoxy-D-arabino-heptonate = 3-dehydroquinate + phosphate. Its pathway is metabolic intermediate biosynthesis; chorismate biosynthesis; chorismate from D-erythrose 4-phosphate and phosphoenolpyruvate: step 2/7. Catalyzes the conversion of 3-deoxy-D-arabino-heptulosonate 7-phosphate (DAHP) to dehydroquinate (DHQ). The protein is 3-dehydroquinate synthase of Prochlorococcus marinus (strain MIT 9211).